Here is a 445-residue protein sequence, read N- to C-terminus: Glycine--tRNA ligase (445 aa).

Residues K97 and E145 each coordinate substrate. Residues 177–179 (RNE), 187–192 (FRTCEF), 262–263 (EI), and 308–311 (GLTR) contribute to the ATP site. Residue 192-196 (FEQME) participates in substrate binding. 304–308 (ETSLG) is a substrate binding site.

This sequence belongs to the class-II aminoacyl-tRNA synthetase family. In terms of assembly, homodimer.

Its subcellular location is the cytoplasm. The catalysed reaction is tRNA(Gly) + glycine + ATP = glycyl-tRNA(Gly) + AMP + diphosphate. Functionally, catalyzes the attachment of glycine to tRNA(Gly). In Borrelia hermsii (strain HS1 / DAH), this protein is Glycine--tRNA ligase.